Consider the following 1108-residue polypeptide: Isoleucine--tRNA ligase (1108 aa).

A 'HIGH' region motif is present at residues 53 to 63 (PFANGLPHYGH). The short motif at 654–658 (KLSKR) is the 'KMSKS' region element. Lys657 contributes to the ATP binding site.

Belongs to the class-I aminoacyl-tRNA synthetase family. IleS type 2 subfamily. In terms of assembly, monomer. Requires Zn(2+) as cofactor.

It is found in the cytoplasm. It catalyses the reaction tRNA(Ile) + L-isoleucine + ATP = L-isoleucyl-tRNA(Ile) + AMP + diphosphate. Functionally, catalyzes the attachment of isoleucine to tRNA(Ile). As IleRS can inadvertently accommodate and process structurally similar amino acids such as valine, to avoid such errors it has two additional distinct tRNA(Ile)-dependent editing activities. One activity is designated as 'pretransfer' editing and involves the hydrolysis of activated Val-AMP. The other activity is designated 'posttransfer' editing and involves deacylation of mischarged Val-tRNA(Ile). The protein is Isoleucine--tRNA ligase of Rickettsia bellii (strain OSU 85-389).